Reading from the N-terminus, the 157-residue chain is 2-C-methyl-D-erythritol 2,4-cyclodiphosphate synthase (157 aa).

The a divalent metal cation site is built by aspartate 9 and histidine 11. Residues 9 to 11 (DVH) and 35 to 36 (HS) contribute to the 4-CDP-2-C-methyl-D-erythritol 2-phosphate site. Histidine 43 provides a ligand contact to a divalent metal cation. 4-CDP-2-C-methyl-D-erythritol 2-phosphate contacts are provided by residues 57 to 59 (DIG), 62 to 66 (FPDTD), 101 to 107 (AEKPKMA), 133 to 136 (TTTE), phenylalanine 140, and arginine 143.

The protein belongs to the IspF family. In terms of assembly, homotrimer. A divalent metal cation serves as cofactor.

It carries out the reaction 4-CDP-2-C-methyl-D-erythritol 2-phosphate = 2-C-methyl-D-erythritol 2,4-cyclic diphosphate + CMP. It functions in the pathway isoprenoid biosynthesis; isopentenyl diphosphate biosynthesis via DXP pathway; isopentenyl diphosphate from 1-deoxy-D-xylulose 5-phosphate: step 4/6. In terms of biological role, involved in the biosynthesis of isopentenyl diphosphate (IPP) and dimethylallyl diphosphate (DMAPP), two major building blocks of isoprenoid compounds. Catalyzes the conversion of 4-diphosphocytidyl-2-C-methyl-D-erythritol 2-phosphate (CDP-ME2P) to 2-C-methyl-D-erythritol 2,4-cyclodiphosphate (ME-CPP) with a corresponding release of cytidine 5-monophosphate (CMP). The polypeptide is 2-C-methyl-D-erythritol 2,4-cyclodiphosphate synthase (Listeria monocytogenes serotype 4b (strain CLIP80459)).